The following is a 268-amino-acid chain: Pantothenate synthetase (268 aa).

18-25 (MGYLHEGH) contributes to the ATP binding site. The active-site Proton donor is His25. (R)-pantoate is bound at residue Gln49. Position 49 (Gln49) interacts with beta-alanine. Residue 135 to 138 (GQKD) participates in ATP binding. Position 141 (Gln141) interacts with (R)-pantoate. ATP contacts are provided by residues Val164 and 172-175 (LSSR).

Belongs to the pantothenate synthetase family. As to quaternary structure, homodimer.

The protein resides in the cytoplasm. The enzyme catalyses (R)-pantoate + beta-alanine + ATP = (R)-pantothenate + AMP + diphosphate + H(+). It participates in cofactor biosynthesis; (R)-pantothenate biosynthesis; (R)-pantothenate from (R)-pantoate and beta-alanine: step 1/1. Catalyzes the condensation of pantoate with beta-alanine in an ATP-dependent reaction via a pantoyl-adenylate intermediate. In Dehalococcoides mccartyi (strain ATCC BAA-2266 / KCTC 15142 / 195) (Dehalococcoides ethenogenes (strain 195)), this protein is Pantothenate synthetase.